We begin with the raw amino-acid sequence, 81 residues long: Type III secretion regulatory protein ExsE (81 aa).

A disordered region spans residues 55 to 81; it reads DPRSEQALQRLADGDGTPLEARTVRRR.

In terms of assembly, interacts with ExsC.

The protein resides in the cytoplasm. It is found in the secreted. Functionally, acts as a negative regulator of the type III secretion regulon (T3SS) expression. In the absence of inducing signals such as low Ca(2+) or host cell contact, the T3SS/injectisome is expressed at a low basal level and exists in a quiescent state due to ExsA sequestration by ExsD. ExsE binding to ExsC disrupts the complex between ExsC and ExsD, thereby allowing free ExsD to bind ExsA. Upon inducing signal, ExsE is secreted allowing ExsC to bind ExsD. In turn, ExsD cannot bind ExsA and prevent ExsA-mediated transcriptional activation of the type III secretion system. This is Type III secretion regulatory protein ExsE (exsE) from Pseudomonas aeruginosa (strain ATCC 15692 / DSM 22644 / CIP 104116 / JCM 14847 / LMG 12228 / 1C / PRS 101 / PAO1).